The chain runs to 298 residues: Biphenyl-2,3-diol 1,2-dioxygenase (298 aa).

2 VOC domains span residues 5–119 (SLGY…IYYG) and 143–264 (GLGH…YGWS). H146, H210, and E260 together coordinate Fe cation.

Belongs to the extradiol ring-cleavage dioxygenase family. As to quaternary structure, homooctamer. The enzyme is composed of two planar tetramers rotated at 45 degrees relative to each other, with a channel in the middle. The cofactor is Fe(2+).

The catalysed reaction is biphenyl-2,3-diol + O2 = 2-hydroxy-6-oxo-6-phenylhexa-2,4-dienoate + H(+). It functions in the pathway xenobiotic degradation; biphenyl degradation; 2-hydroxy-2,4-pentadienoate and benzoate from biphenyl: step 3/4. Functionally, shows a preference for catechols with groups immediately adjacent to the hydroxyl substituents. This chain is Biphenyl-2,3-diol 1,2-dioxygenase (bphC), found in Paraburkholderia xenovorans (strain LB400).